Here is a 295-residue protein sequence, read N- to C-terminus: Putative enoyl reductase C646.07c (295 aa).

At 1 to 84 the chain is on the cytoplasmic side; the sequence is MSITLSSRGR…KDLGPQIGWR (84 aa). A helical transmembrane segment spans residues 85–105; that stretch reads TVFMIEYLGPLVIHLFFILNY. The Lumenal portion of the chain corresponds to 106 to 157; the sequence is KWIYRKDYNLCLNQKIAFVLVMLHFMKREYESIFVHRFSLATMPLRNIFKNC. Residues 158-178 form a helical membrane-spanning segment; the sequence is AHYHLLSGLFLAYFIYGPWHA. At 179–186 the chain is on the cytoplasmic side; it reads NDYIKPNH. A helical transmembrane segment spans residues 187-207; it reads LLFLIVGWAFAVLSNFRTHII. Topologically, residues 208-223 are lumenal; it reads LRDLRPAGSKKRVIPT. Residues 224 to 246 traverse the membrane as a helical segment; it reads GYGFNLVSFPNYFFESLGWLFFA. The Cytoplasmic portion of the chain corresponds to 247 to 250; the sequence is LLTK. A helical transmembrane segment spans residues 251-268; that stretch reads SWASWIFLFVGSAQMFVW. Residues 269 to 295 are Lumenal-facing; the sequence is AKKKHARYLKEFPNYPRSRKIMIPFFL.

It belongs to the steroid 5-alpha reductase family.

Its subcellular location is the endoplasmic reticulum membrane. The enzyme catalyses a (2E)-enoyl-CoA + NADPH + H(+) = a 2,3-saturated acyl-CoA + NADP(+). This Schizosaccharomyces pombe (strain 972 / ATCC 24843) (Fission yeast) protein is Putative enoyl reductase C646.07c.